A 179-amino-acid polypeptide reads, in one-letter code: Large ribosomal subunit protein uL6 (179 aa).

It belongs to the universal ribosomal protein uL6 family. In terms of assembly, part of the 50S ribosomal subunit.

Functionally, this protein binds to the 23S rRNA, and is important in its secondary structure. It is located near the subunit interface in the base of the L7/L12 stalk, and near the tRNA binding site of the peptidyltransferase center. This Leptospira borgpetersenii serovar Hardjo-bovis (strain JB197) protein is Large ribosomal subunit protein uL6.